The following is a 1645-amino-acid chain: Outer membrane protein B (1645 aa).

Positions 1329–1352 are excised as a propeptide; that stretch reads GALRYLSNSETADVGGSETGAVSS. Residues 1357 to 1645 enclose the Autotransporter domain; that stretch reads IDQVSYGVWA…QGTLKVRINF (289 aa).

Belongs to the rickettsiae OmpA/OmpB family.

Its subcellular location is the periplasm. It is found in the secreted. The protein localises to the cell surface. The protein resides in the cell outer membrane. Its function is as follows. The 120 kDa surface-exposed protein is a major structural protein which may play a role as a rickettsial virulence factor and/or immunogen during infection. Functionally, the 32 kDa beta peptide may serve as a membrane anchor. This Rickettsia typhi (strain ATCC VR-144 / Wilmington) protein is Outer membrane protein B (ompB).